The primary structure comprises 963 residues: Longitudinals lacking protein, isoforms J/P/Q/S/Z (963 aa).

Residues 32 to 97 (VDCTLAAEGK…MYRGEVNISQ (66 aa)) enclose the BTB domain. Disordered regions lie at residues 115–200 (LSDN…SSVL), 228–340 (SSGP…ASAS), 447–469 (DAQQRDPQDEAGQNEGGESRIRV), and 482–520 (GKSSDEPSDKLTQSKKSLISDAKTTNKTSTPIRPKVSTT). 4 stretches are compositionally biased toward low complexity: residues 162-175 (SGDVSGSREGSSSP), 228-251 (SSGPAAGTSSQASSTQQQQPLTST), 263-293 (TSSTAAPASGASASAAVQQAHLHQQQAQTTS), and 329-340 (NSATGPNPASAS). Residues 491–512 (KLTQSKKSLISDAKTTNKTSTP) are compositionally biased toward polar residues. A C2H2-type 1; degenerate zinc finger spans residues 849 to 871 (WVCRNCNRTYKWKNSLKCHLKNE). The segment at 878-901 (YFCSKMCGYATNVHSNLKRHLNTK) adopts a C2H2-type 2; degenerate zinc-finger fold. The interval 900–963 (TKCRDREKDA…YTLVFQNDSA (64 aa)) is disordered. Positions 901–915 (KCRDREKDADDEKKP) are enriched in basic and acidic residues. Residues 937–953 (SSSNNNNNGGGSSTSST) show a composition bias toward low complexity. Over residues 954–963 (YTLVFQNDSA) the composition is skewed to polar residues.

In terms of tissue distribution, by stage 11, isoform Q, isoform P and isoform Z are expressed throughout the mesoderm. From stage 15, expression of isoform P expands to all tissues, whereas expression of isoform Z and isoform Q becomes restricted during later stages; starting from stage 14 to 16, isoform Z is expressed in muscle, and isoform Q and isoform Z are expressed in the CNS. For some isoforms, expression is also seen in specific types of cells in the embryo; isoform Z is expressed in the ventral furrow at stage 5, and isoform Q is expressed around the tracheal pits at stage 11. Isoform Z also shows transient enrichment in a dorsal cell layer in the CNS at stages 13 and 14.

The protein resides in the nucleus. Its function is as follows. Putative transcription factor required for axon growth and guidance in the central and peripheral nervous systems. Repels CNS axons away from the midline by promoting the expression of the midline repellent sli and its receptor robo. In Drosophila melanogaster (Fruit fly), this protein is Longitudinals lacking protein, isoforms J/P/Q/S/Z.